Consider the following 133-residue polypeptide: uncharacterized protein (133 aa).

In terms of domain architecture, Response regulatory spans 9 to 128 (RILVYSDNVQ…VLGRTVLSLL (120 aa)). Asp64 is modified (4-aspartylphosphate).

This is an uncharacterized protein from Mycobacterium tuberculosis (strain CDC 1551 / Oshkosh).